The sequence spans 1035 residues: Alpha-mannosidase B (1035 aa).

Positions 1 to 20 (MGKVLILFLFVLLLITFINC) are cleaved as a signal peptide. 2 N-linked (GlcNAc...) asparagine glycosylation sites follow: Asn19 and Asn30. The Zn(2+) site is built by His47 and Asp49. An N-linked (GlcNAc...) asparagine glycan is attached at Asn63. Asp161 contributes to the Zn(2+) binding site. Residue Asp161 is the Nucleophile of the active site. N-linked (GlcNAc...) asparagine glycosylation is found at Asn245, Asn250, Asn270, Asn309, Asn327, and Asn438. Position 446 (His446) interacts with Zn(2+). N-linked (GlcNAc...) asparagine glycosylation is found at Asn487, Asn497, Asn503, Asn710, Asn719, Asn735, Asn792, Asn852, Asn863, Asn880, Asn962, and Asn993.

The protein belongs to the glycosyl hydrolase 38 family. Zn(2+) serves as cofactor.

It is found in the secreted. It carries out the reaction Hydrolysis of terminal, non-reducing alpha-D-mannose residues in alpha-D-mannosides.. This Dictyostelium discoideum (Social amoeba) protein is Alpha-mannosidase B (manB).